The following is a 197-amino-acid chain: Probable GTP-binding protein EngB (197 aa).

An EngB-type G domain is found at 22–195 (NLPEIAFVGR…VDYLFDDLVE (174 aa)). GTP-binding positions include 30-37 (GRSNVGKS), 57-61 (GKTRL), 75-78 (DLPG), 142-145 (TKSD), and 174-176 (FSS). Positions 37 and 59 each coordinate Mg(2+).

The protein belongs to the TRAFAC class TrmE-Era-EngA-EngB-Septin-like GTPase superfamily. EngB GTPase family. The cofactor is Mg(2+).

Functionally, necessary for normal cell division and for the maintenance of normal septation. The protein is Probable GTP-binding protein EngB of Clostridium perfringens (strain SM101 / Type A).